The primary structure comprises 430 residues: MKETIDFLIDTIEARQVLDSRGNPTVEAEVFLECGAIGRAIVPSGASTGAHEAHELRDGGTKYMGKGVLNAVNKIHETISPALCGLSALDQTSIDNLMIEIDGTPNKSSLGANSILAVSLANARAASNALDLPLYRYLGDPLSNLLPVPLMNVINGGAHAPNGLDCQEFMLVPHGVKTFSEALRIGTEIFHSLKSLLEKKGLSTAVGDEGGFAPELSSSEAAGDLLLEAIQKAGFIPGEQVSLALDVASTEFYKDGFYKYEGKSLTSSQMISYLSNLVSNYPIVSIEDGLAEDDWEGWSALNKEIGNKVQLVGDDLFVTNTERLRKGILEKSANSILIKVNQIGTLTETLEAMDLAKSAGFTSVISHRSGETEDTTIADLSVATRAGQIKTGSLSRSERIAKYNRLLRIEEELGDQARFAGDLGLGPKNI.

Glutamine 167 provides a ligand contact to (2R)-2-phosphoglycerate. The Proton donor role is filled by glutamate 209. Positions 246, 287, and 314 each coordinate Mg(2+). Positions 339, 368, 369, and 390 each coordinate (2R)-2-phosphoglycerate. Lysine 339 serves as the catalytic Proton acceptor.

It belongs to the enolase family. Requires Mg(2+) as cofactor.

The protein resides in the cytoplasm. Its subcellular location is the secreted. The protein localises to the cell surface. The catalysed reaction is (2R)-2-phosphoglycerate = phosphoenolpyruvate + H2O. Its pathway is carbohydrate degradation; glycolysis; pyruvate from D-glyceraldehyde 3-phosphate: step 4/5. Its function is as follows. Catalyzes the reversible conversion of 2-phosphoglycerate (2-PG) into phosphoenolpyruvate (PEP). It is essential for the degradation of carbohydrates via glycolysis. This chain is Enolase, found in Prochlorococcus marinus subsp. pastoris (strain CCMP1986 / NIES-2087 / MED4).